A 525-amino-acid polypeptide reads, in one-letter code: Light-independent protochlorophyllide reductase subunit B (525 aa).

A [4Fe-4S] cluster-binding site is contributed by D36. D286 (proton donor) is an active-site residue. 421–422 (GL) provides a ligand contact to substrate.

Belongs to the ChlB/BchB/BchZ family. As to quaternary structure, protochlorophyllide reductase is composed of three subunits; ChlL, ChlN and ChlB. Forms a heterotetramer of two ChlB and two ChlN subunits. The cofactor is [4Fe-4S] cluster.

The enzyme catalyses chlorophyllide a + oxidized 2[4Fe-4S]-[ferredoxin] + 2 ADP + 2 phosphate = protochlorophyllide a + reduced 2[4Fe-4S]-[ferredoxin] + 2 ATP + 2 H2O. The protein operates within porphyrin-containing compound metabolism; chlorophyll biosynthesis (light-independent). Component of the dark-operative protochlorophyllide reductase (DPOR) that uses Mg-ATP and reduced ferredoxin to reduce ring D of protochlorophyllide (Pchlide) to form chlorophyllide a (Chlide). This reaction is light-independent. The NB-protein (ChlN-ChlB) is the catalytic component of the complex. The polypeptide is Light-independent protochlorophyllide reductase subunit B (Prochlorococcus marinus (strain NATL2A)).